The sequence spans 576 residues: uncharacterized protein (576 aa).

The disordered stretch occupies residues 41-78; it reads EKESESKLNSKSTTLQSSDSEDWDSEENEDDITDVGVP. Low complexity predominate over residues 49-58; sequence NSKSTTLQSS. Residues 59–73 show a composition bias toward acidic residues; the sequence is DSEDWDSEENEDDIT. 5 WD repeats span residues 87–126, 195–235, 248–288, 296–335, and 393–433; these read GHSK…ATNP, GHIA…SQLE, LSRI…KRPV, LPQQ…KCVN, and TVTA…RGVK. The disordered stretch occupies residues 547-576; the sequence is SETQPTPIYQGVTEGDISSEEGNPSKKQKR.

This is an uncharacterized protein from Schizosaccharomyces pombe (strain 972 / ATCC 24843) (Fission yeast).